Here is a 488-residue protein sequence, read N- to C-terminus: UDP-N-acetylmuramate--L-alanine ligase (488 aa).

129 to 135 (GSHGKTT) lines the ATP pocket.

This sequence belongs to the MurCDEF family.

It is found in the cytoplasm. It carries out the reaction UDP-N-acetyl-alpha-D-muramate + L-alanine + ATP = UDP-N-acetyl-alpha-D-muramoyl-L-alanine + ADP + phosphate + H(+). Its pathway is cell wall biogenesis; peptidoglycan biosynthesis. In terms of biological role, cell wall formation. The polypeptide is UDP-N-acetylmuramate--L-alanine ligase (Prochlorococcus marinus (strain MIT 9313)).